The following is a 181-amino-acid chain: Large ribosomal subunit protein uL6 (181 aa).

This sequence belongs to the universal ribosomal protein uL6 family. As to quaternary structure, part of the 50S ribosomal subunit.

This protein binds to the 23S rRNA, and is important in its secondary structure. It is located near the subunit interface in the base of the L7/L12 stalk, and near the tRNA binding site of the peptidyltransferase center. In Phytoplasma mali (strain AT), this protein is Large ribosomal subunit protein uL6.